Consider the following 356-residue polypeptide: Fe(3+) ions import ATP-binding protein FbpC 2 (356 aa).

Residues 12–246 (LTVKNLNKFF…PNHLETAKFM (235 aa)) form the ABC transporter domain. 44–51 (GSSGCGKT) contacts ATP.

This sequence belongs to the ABC transporter superfamily. Fe(3+) ion importer (TC 3.A.1.10) family. As to quaternary structure, the complex is composed of two ATP-binding proteins (FbpC), two transmembrane proteins (FbpB) and a solute-binding protein (FbpA).

The protein localises to the cell inner membrane. The catalysed reaction is Fe(3+)(out) + ATP + H2O = Fe(3+)(in) + ADP + phosphate + H(+). Functionally, part of the ABC transporter complex FbpABC involved in Fe(3+) ions import. Responsible for energy coupling to the transport system. In Haemophilus influenzae (strain ATCC 51907 / DSM 11121 / KW20 / Rd), this protein is Fe(3+) ions import ATP-binding protein FbpC 2.